Here is a 362-residue protein sequence, read N- to C-terminus: Endopolygalacturonase II (362 aa).

Positions 1–21 are cleaved as a signal peptide; the sequence is MHSFASLLAYGLAASATLASA. A propeptide spanning residues 22 to 27 is cleaved from the precursor; it reads SPIEAR. Cys30 and Cys45 are joined by a disulfide. The stretch at 156-186 is one PbH1 1 repeat; that stretch reads ADDITLTDITINNADGDTLGGHNTDAFDVGN. The active-site Proton donor is Asp201. Cys203 and Cys219 form a disulfide bridge. The active site involves His223. PbH1 repeat units lie at residues 238–259, 267–289, and 301–322; these read VKNV…RIKT, VSEI…VIQQ, and TNGV…DSKA. N-linked (GlcNAc...) (high mannose) asparagine glycosylation is present at Asn240. Disulfide bonds link Cys329–Cys334 and Cys353–Cys362.

This sequence belongs to the glycosyl hydrolase 28 family.

It is found in the secreted. It carries out the reaction (1,4-alpha-D-galacturonosyl)n+m + H2O = (1,4-alpha-D-galacturonosyl)n + (1,4-alpha-D-galacturonosyl)m.. In terms of biological role, involved in maceration and soft-rotting of plant tissue. Hydrolyzes the 1,4-alpha glycosidic bonds of de-esterified pectate in the smooth region of the plant cell wall. This Aspergillus niger protein is Endopolygalacturonase II.